Reading from the N-terminus, the 338-residue chain is tRNA N6-adenosine threonylcarbamoyltransferase (338 aa).

H112 and H116 together coordinate Fe cation. Substrate contacts are provided by residues 135–139, D168, G181, and N273; that span reads LVSGG. Fe cation is bound at residue D301.

Belongs to the KAE1 / TsaD family. Fe(2+) is required as a cofactor.

Its subcellular location is the cytoplasm. It carries out the reaction L-threonylcarbamoyladenylate + adenosine(37) in tRNA = N(6)-L-threonylcarbamoyladenosine(37) in tRNA + AMP + H(+). Required for the formation of a threonylcarbamoyl group on adenosine at position 37 (t(6)A37) in tRNAs that read codons beginning with adenine. Is involved in the transfer of the threonylcarbamoyl moiety of threonylcarbamoyl-AMP (TC-AMP) to the N6 group of A37, together with TsaE and TsaB. TsaD likely plays a direct catalytic role in this reaction. The sequence is that of tRNA N6-adenosine threonylcarbamoyltransferase from Buchnera aphidicola subsp. Baizongia pistaciae (strain Bp).